We begin with the raw amino-acid sequence, 561 residues long: Transmembrane protein 209 (561 aa).

Residue serine 11 is modified to Phosphoserine. The chain crosses the membrane as a helical span at residues valine 28–threonine 48. Asparagine 57 carries N-linked (GlcNAc...) asparagine glycosylation. Residues tyrosine 60–phenylalanine 80 form a helical membrane-spanning segment. Serine 98 bears the Phosphoserine mark. Disordered stretches follow at residues leucine 120–threonine 156 and serine 200–lysine 232. Residues serine 138–proline 152 are compositionally biased toward low complexity. Serine 201 and serine 248 each carry phosphoserine. The tract at residues glutamate 250–proline 270 is disordered. The span at serine 260–proline 270 shows a compositional bias: low complexity. Asparagine 274 carries N-linked (GlcNAc...) asparagine glycosylation. Residue serine 278 is modified to Phosphoserine.

As to quaternary structure, interacts with NUP205.

Its subcellular location is the membrane. It is found in the nucleus envelope. It localises to the golgi apparatus. The protein localises to the cytoplasm. Functionally, nuclear envelope protein which in association with NUP205, may be involved in nuclear transport of various nuclear proteins in addition to MYC. The sequence is that of Transmembrane protein 209 (Tmem209) from Mus musculus (Mouse).